Here is an 80-residue protein sequence, read N- to C-terminus: Myocilin opposite strand protein (80 aa).

Residues 53–80 (EQAPPPHRTYLTVPPAPPPSPAEDPTVS) form a disordered region.

This chain is Myocilin opposite strand protein, found in Homo sapiens (Human).